The primary structure comprises 614 residues: BTB/POZ domain-containing protein At5g48800 (614 aa).

Positions S43–S111 constitute a BTB domain. The 266-residue stretch at D219–K484 folds into the NPH3 domain. Y425 is subject to Phosphotyrosine. 2 disordered regions span residues S492–Y525 and G583–D614. Over residues S507–P521 the composition is skewed to polar residues. Residues K522–R562 are a coiled coil. The segment covering G583–S597 has biased composition (low complexity).

This sequence belongs to the NPH3 family.

It functions in the pathway protein modification; protein ubiquitination. Its function is as follows. May act as a substrate-specific adapter of an E3 ubiquitin-protein ligase complex (CUL3-RBX1-BTB) which mediates the ubiquitination and subsequent proteasomal degradation of target proteins. The protein is BTB/POZ domain-containing protein At5g48800 of Arabidopsis thaliana (Mouse-ear cress).